The following is a 229-amino-acid chain: Large ribosomal subunit protein uL1 (229 aa).

This sequence belongs to the universal ribosomal protein uL1 family. Part of the 50S ribosomal subunit.

Its function is as follows. Binds directly to 23S rRNA. The L1 stalk is quite mobile in the ribosome, and is involved in E site tRNA release. Protein L1 is also a translational repressor protein, it controls the translation of the L11 operon by binding to its mRNA. The sequence is that of Large ribosomal subunit protein uL1 from Haemophilus ducreyi (strain 35000HP / ATCC 700724).